Reading from the N-terminus, the 115-residue chain is Holo-[acyl-carrier-protein] synthase (115 aa).

Mg(2+) is bound by residues Asp-5 and Glu-50.

Belongs to the P-Pant transferase superfamily. AcpS family. The cofactor is Mg(2+).

The protein resides in the cytoplasm. The enzyme catalyses apo-[ACP] + CoA = holo-[ACP] + adenosine 3',5'-bisphosphate + H(+). In terms of biological role, transfers the 4'-phosphopantetheine moiety from coenzyme A to a Ser of acyl-carrier-protein. The chain is Holo-[acyl-carrier-protein] synthase from Campylobacter fetus subsp. fetus (strain 82-40).